The following is a 124-amino-acid chain: Aspartate 1-decarboxylase (124 aa).

Residue Ser-21 is the Schiff-base intermediate with substrate; via pyruvic acid of the active site. Ser-21 bears the Pyruvic acid (Ser) mark. Thr-53 contacts substrate. Tyr-54 functions as the Proton donor in the catalytic mechanism. Residue 69-71 participates in substrate binding; the sequence is GAA.

Belongs to the PanD family. Heterooctamer of four alpha and four beta subunits. It depends on pyruvate as a cofactor. Is synthesized initially as an inactive proenzyme, which is activated by self-cleavage at a specific serine bond to produce a beta-subunit with a hydroxyl group at its C-terminus and an alpha-subunit with a pyruvoyl group at its N-terminus.

It is found in the cytoplasm. It carries out the reaction L-aspartate + H(+) = beta-alanine + CO2. Its pathway is cofactor biosynthesis; (R)-pantothenate biosynthesis; beta-alanine from L-aspartate: step 1/1. Catalyzes the pyruvoyl-dependent decarboxylation of aspartate to produce beta-alanine. This Dehalococcoides mccartyi (strain CBDB1) protein is Aspartate 1-decarboxylase.